A 452-amino-acid polypeptide reads, in one-letter code: Protein EARLY-RESPONSIVE TO DEHYDRATION 7, chloroplastic (452 aa).

Residues 1–18 are compositionally biased toward polar residues; sequence MESSGDKQTSSLYPTVDT. The transit peptide at 1 to 28 directs the protein to the chloroplast; sequence MESSGDKQTSSLYPTVDTSNPEAPINPS. The tract at residues 1 to 37 is disordered; the sequence is MESSGDKQTSSLYPTVDTSNPEAPINPSSSSSTNNLY. The span at 19–37 shows a compositional bias: low complexity; sequence SNPEAPINPSSSSSTNNLY. The Senescence domain maps to 258–426; it reads IATGSGHLIK…AWVAFKIRKA (169 aa).

The protein localises to the plastid. The protein resides in the chloroplast. This Arabidopsis thaliana (Mouse-ear cress) protein is Protein EARLY-RESPONSIVE TO DEHYDRATION 7, chloroplastic.